A 216-amino-acid polypeptide reads, in one-letter code: Protein shisa-5 (216 aa).

An N-terminal signal peptide occupies residues 1–26 (MAAPAPAPRILVLLLLLLPAPEGAQS). At 27–93 (ELCMISHGRK…SGFDSDPVAR (67 aa)) the chain is on the extracellular side. A helical membrane pass occupies residues 94–114 (FGTVIAIGVTLFVIAVVTVIV). Residues 115–216 (CCTCSCCCLY…AYMEPPKAVP (102 aa)) are Cytoplasmic-facing.

Belongs to the shisa family. In terms of assembly, interacts with PDCD6; PDCD6 can stabilize SHISA5.

The protein resides in the endoplasmic reticulum membrane. It localises to the nucleus membrane. Can induce apoptosis in a caspase-dependent manner and plays a role in p53/TP53-dependent apoptosis. This is Protein shisa-5 (SHISA5) from Bos taurus (Bovine).